The primary structure comprises 174 residues: Auxin-responsive protein IAA2 (174 aa).

The EAR-like (transcriptional repression) signature appears at 16 to 20 (LCLGL). Residues 44–67 (FEETRDEEESTPPTKTQIVGWPPV) are disordered. Positions 77–164 (VSYVKVSMDG…SCKRLRIMKG (88 aa)) constitute a PB1 domain.

The protein belongs to the Aux/IAA family. As to quaternary structure, homodimers and heterodimers. Interacts with the auxin-responsive protein IAA1. Interacts with TPL. In terms of tissue distribution, preferentially expressed in vegetative organs.

It localises to the nucleus. Its function is as follows. Aux/IAA proteins are short-lived transcriptional factors that function as repressors of early auxin response genes at low auxin concentrations. Repression is thought to result from the interaction with auxin response factors (ARFs), proteins that bind to the auxin-responsive promoter element (AuxRE). Formation of heterodimers with ARF proteins may alter their ability to modulate early auxin response genes expression. This Arabidopsis thaliana (Mouse-ear cress) protein is Auxin-responsive protein IAA2 (IAA2).